Here is a 453-residue protein sequence, read N- to C-terminus: Phenylalanine-4-hydroxylase (453 aa).

Alanine 2 is modified (N-acetylalanine). A Phosphoserine; by PKA modification is found at serine 16. The ACT domain maps to 36–114 (SLIFSLKEEV…TVHELSRDKE (79 aa)). Positions 285, 290, and 330 each coordinate Fe cation.

Belongs to the biopterin-dependent aromatic amino acid hydroxylase family. As to quaternary structure, homodimer and homotetramer. Requires Fe(2+) as cofactor. Phosphorylation at Ser-16 increases basal activity and facilitates activation by the substrate phenylalanine.

The enzyme catalyses (6R)-L-erythro-5,6,7,8-tetrahydrobiopterin + L-phenylalanine + O2 = (4aS,6R)-4a-hydroxy-L-erythro-5,6,7,8-tetrahydrobiopterin + L-tyrosine. It functions in the pathway amino-acid degradation; L-phenylalanine degradation; acetoacetate and fumarate from L-phenylalanine: step 1/6. With respect to regulation, N-terminal region of PAH is thought to contain allosteric binding sites for phenylalanine and to constitute an 'inhibitory' domain that regulates the activity of a catalytic domain in the C-terminal portion of the molecule. Functionally, catalyzes the hydroxylation of L-phenylalanine to L-tyrosine. The sequence is that of Phenylalanine-4-hydroxylase (Pah) from Rattus norvegicus (Rat).